A 57-amino-acid chain; its full sequence is Large ribosomal subunit protein bL33 (57 aa).

The protein belongs to the bacterial ribosomal protein bL33 family.

This Shewanella sp. (strain W3-18-1) protein is Large ribosomal subunit protein bL33.